Consider the following 845-residue polypeptide: Protein P (845 aa).

Residues 1–179 are terminal protein domain (TP); the sequence is MPLSYQHFRK…FCGSPYSWEQ (179 aa). Residues 180-348 are spacer; the sequence is ELHHGRLVIK…YCLSHLVNLL (169 aa). Residues 349–692 are polymerase/reverse transcriptase domain (RT); the sequence is EDWGPCTEHG…YMNLYPVARQ (344 aa). Positions 359 to 602 constitute a Reverse transcriptase domain; that stretch reads EHHIRIPRTP…YSLNFMGYVI (244 aa). D431, D553, and D554 together coordinate Mg(2+).

Belongs to the hepadnaviridae P protein family.

It carries out the reaction DNA(n) + a 2'-deoxyribonucleoside 5'-triphosphate = DNA(n+1) + diphosphate. It catalyses the reaction Endonucleolytic cleavage to 5'-phosphomonoester.. Its activity is regulated as follows. Activated by host HSP70 and HSP40 in vitro to be able to bind the epsilon loop of the pgRNA. Because deletion of the RNase H region renders the protein partly chaperone-independent, the chaperones may be needed indirectly to relieve occlusion of the RNA-binding site by this domain. Inhibited by several reverse-transcriptase inhibitors: Lamivudine, Adefovir and Entecavir. Functionally, multifunctional enzyme that converts the viral RNA genome into dsDNA in viral cytoplasmic capsids. This enzyme displays a DNA polymerase activity that can copy either DNA or RNA templates, and a ribonuclease H (RNase H) activity that cleaves the RNA strand of RNA-DNA heteroduplexes in a partially processive 3'- to 5'-endonucleasic mode. Neo-synthesized pregenomic RNA (pgRNA) are encapsidated together with the P protein, and reverse-transcribed inside the nucleocapsid. Initiation of reverse-transcription occurs first by binding the epsilon loop on the pgRNA genome, and is initiated by protein priming, thereby the 5'-end of (-)DNA is covalently linked to P protein. Partial (+)DNA is synthesized from the (-)DNA template and generates the relaxed circular DNA (RC-DNA) genome. After budding and infection, the RC-DNA migrates in the nucleus, and is converted into a plasmid-like covalently closed circular DNA (cccDNA). The activity of P protein does not seem to be necessary for cccDNA generation, and is presumably released from (+)DNA by host nuclear DNA repair machinery. The sequence is that of Protein P from Homo sapiens (Human).